We begin with the raw amino-acid sequence, 420 residues long: Sulfate adenylyltransferase (420 aa).

The residue at position 2 (A2) is an N-acetylalanine.

Belongs to the sulfate adenylyltransferase family. It depends on Mg(2+) as a cofactor.

It carries out the reaction sulfate + ATP + H(+) = adenosine 5'-phosphosulfate + diphosphate. Its pathway is sulfur metabolism; hydrogen sulfide biosynthesis; sulfite from sulfate: step 1/3. Inhibited by adenosine 5'-phosphosulfate (APS), but not by 3'phosphoadenosine 5'-phosphosulfate (PAPS). Inhibited by AMP, ADP, CTP, GTP, ITP, UTP and anions other than those in group IV. The sequence is that of Sulfate adenylyltransferase from Pyropia yezoensis (Susabi-nori).